The chain runs to 304 residues: Mitochondrial glycine transporter (304 aa).

Solcar repeat units follow at residues 3-82 (GKSK…VREA), 106-186 (ENLI…LKVA), and 209-293 (SSAM…LVKR). Transmembrane regions (helical) follow at residues 9–34 (IYAG…TRVQ), 57–83 (GTLP…REAV), 108–133 (LISG…VRYE), 161–184 (GWAA…EQLK), 213–239 (INSV…KTRM), and 268–286 (GLAL…SWCI).

The protein belongs to the mitochondrial carrier (TC 2.A.29) family. SLC25A38 subfamily.

Its subcellular location is the mitochondrion inner membrane. It carries out the reaction glycine(in) = glycine(out). Functionally, mitochondrial glycine transporter that imports glycine into the mitochondrial matrix. Plays an important role in providing glycine for the first enzymatic step in heme biosynthesis, the condensation of glycine with succinyl-CoA to produce 5-aminolevulinate (ALA) in the mitochondrial matrix. This is Mitochondrial glycine transporter from Yarrowia lipolytica (strain CLIB 122 / E 150) (Yeast).